The sequence spans 534 residues: Serine protease vicPa (534 aa).

Residues 1-17 (MLCYLLIHILCLQAVLG) form the signal peptide. 2 N-linked (GlcNAc...) asparagine glycosylation sites follow: N65 and N126. S174 functions as the Charge relay system in the catalytic mechanism. 3 N-linked (GlcNAc...) asparagine glycosylation sites follow: N297, N416, and N436. The Charge relay system role is filled by D450.

Belongs to the peptidase S28 family.

It functions in the pathway mycotoxin biosynthesis. In terms of biological role, serine protease, part of the gene cluster that mediates the biosynthesis of the secondary metabolite victorin, the molecular basis for Victoria blight of oats. Within the pathway, vicPa and vicPb are probably involved in the processing of the vicA1 and vicA2 precursors. The pathway starts with the processing of the precursor vicA1 by several endopeptidases including kexin proteases as well as the cluster-specific S28 family peptidases vicPa and vicPb to produce 7 identical copies of the hexapeptide Gly-Leu-Lys-Leu-Ala-Phe. After being excised from the precursor peptide, the core peptides are cyclized and modified post-translationally by enzymes encoded within the gene cluster. The ustYa family oxidase vicYb is required for the formation of the macrocycle in victorin and the copper amine oxidases (CAOs) vicK1 and vicK2 are responsible for converting victorin to the active form by oxidizing the N-terminal glycyl residue in the peptides to glyoxylate. Relaxed substrate specificity of enzymes in the victorin biosynthetic pathway results in a metabolic grid that produces a set of analogs including victorinines B, C, E or HV-toxin M. This chain is Serine protease vicPa, found in Bipolaris victoriae (strain FI3) (Victoria blight of oats agent).